The primary structure comprises 382 residues: Probable protein phosphatase 2C 65 (382 aa).

A PPM-type phosphatase domain is found at 47-337 (HVSMSIKQGK…DDCAVVVLYL (291 aa)). Mn(2+)-binding residues include D83 and G84. Positions 107–126 (KIRSSKSAGDENIENNSSQS) are disordered. 2 residues coordinate Mn(2+): D282 and D328.

This sequence belongs to the PP2C family. Mg(2+) serves as cofactor. It depends on Mn(2+) as a cofactor.

It catalyses the reaction O-phospho-L-seryl-[protein] + H2O = L-seryl-[protein] + phosphate. The enzyme catalyses O-phospho-L-threonyl-[protein] + H2O = L-threonyl-[protein] + phosphate. The chain is Probable protein phosphatase 2C 65 from Arabidopsis thaliana (Mouse-ear cress).